A 233-amino-acid chain; its full sequence is tRNA (guanine-N(7)-)-methyltransferase (233 aa).

S-adenosyl-L-methionine-binding residues include E62, E87, D116, and D138. Residue D138 is part of the active site. Residues K142, D174, and 212 to 215 (TRYE) contribute to the substrate site.

This sequence belongs to the class I-like SAM-binding methyltransferase superfamily. TrmB family.

The enzyme catalyses guanosine(46) in tRNA + S-adenosyl-L-methionine = N(7)-methylguanosine(46) in tRNA + S-adenosyl-L-homocysteine. It participates in tRNA modification; N(7)-methylguanine-tRNA biosynthesis. In terms of biological role, catalyzes the formation of N(7)-methylguanine at position 46 (m7G46) in tRNA. In Bartonella henselae (strain ATCC 49882 / DSM 28221 / CCUG 30454 / Houston 1) (Rochalimaea henselae), this protein is tRNA (guanine-N(7)-)-methyltransferase.